We begin with the raw amino-acid sequence, 105 residues long: Large ribosomal subunit protein uL24 (105 aa).

The protein belongs to the universal ribosomal protein uL24 family. As to quaternary structure, part of the 50S ribosomal subunit.

In terms of biological role, one of two assembly initiator proteins, it binds directly to the 5'-end of the 23S rRNA, where it nucleates assembly of the 50S subunit. Its function is as follows. One of the proteins that surrounds the polypeptide exit tunnel on the outside of the subunit. The chain is Large ribosomal subunit protein uL24 from Psychrobacter sp. (strain PRwf-1).